The following is a 425-amino-acid chain: Oxalate decarboxylase ARB_02208 (425 aa).

The first 19 residues, 1-19, serve as a signal peptide directing secretion; it reads MKFGSALVAAVAAVAGVAA. The Cupin type-1 1 domain maps to 73 to 236; that stretch reads FSLSKTRMFH…FNISTGGTFD (164 aa). Mn(2+) contacts are provided by His116, His118, Glu122, and His161. N-linked (GlcNAc...) asparagine glycans are attached at residues Asn228, Asn247, Asn254, and Asn265. In terms of domain architecture, Cupin type-1 2 spans 270 to 414; it reads FHIRDAPEIQ…AINVPIDVID (145 aa). His317, His319, Glu324, and His363 together coordinate Mn(2+). An N-linked (GlcNAc...) asparagine glycan is attached at Asn367. Glu378 functions as the Proton donor in the catalytic mechanism.

The cofactor is Mn(2+).

Its subcellular location is the secreted. It catalyses the reaction oxalate + H(+) = formate + CO2. In terms of biological role, converts oxalate to formate and CO(2) in an O(2)-dependent reaction. Can also catalyze minor side reactions: oxalate oxidation to produce H(2)O(2), and oxalate-dependent, H(2)O(2)-independent dye oxidations. The chain is Oxalate decarboxylase ARB_02208 from Arthroderma benhamiae (strain ATCC MYA-4681 / CBS 112371) (Trichophyton mentagrophytes).